The chain runs to 148 residues: Large ribosomal subunit protein uL13 (148 aa).

The protein belongs to the universal ribosomal protein uL13 family. Part of the 50S ribosomal subunit.

In terms of biological role, this protein is one of the early assembly proteins of the 50S ribosomal subunit, although it is not seen to bind rRNA by itself. It is important during the early stages of 50S assembly. The polypeptide is Large ribosomal subunit protein uL13 (Ureaplasma urealyticum serovar 10 (strain ATCC 33699 / Western)).